The chain runs to 620 residues: Dihydroxy-acid dehydratase (620 aa).

Residue Asp-82 coordinates Mg(2+). Cys-123 lines the [2Fe-2S] cluster pocket. 2 residues coordinate Mg(2+): Asp-124 and Lys-125. N6-carboxylysine is present on Lys-125. Position 197 (Cys-197) interacts with [2Fe-2S] cluster. Residue Glu-493 participates in Mg(2+) binding. Ser-519 functions as the Proton acceptor in the catalytic mechanism.

This sequence belongs to the IlvD/Edd family. Homodimer. The cofactor is [2Fe-2S] cluster. Mg(2+) is required as a cofactor.

It catalyses the reaction (2R)-2,3-dihydroxy-3-methylbutanoate = 3-methyl-2-oxobutanoate + H2O. The enzyme catalyses (2R,3R)-2,3-dihydroxy-3-methylpentanoate = (S)-3-methyl-2-oxopentanoate + H2O. Its pathway is amino-acid biosynthesis; L-isoleucine biosynthesis; L-isoleucine from 2-oxobutanoate: step 3/4. It functions in the pathway amino-acid biosynthesis; L-valine biosynthesis; L-valine from pyruvate: step 3/4. In terms of biological role, functions in the biosynthesis of branched-chain amino acids. Catalyzes the dehydration of (2R,3R)-2,3-dihydroxy-3-methylpentanoate (2,3-dihydroxy-3-methylvalerate) into 2-oxo-3-methylpentanoate (2-oxo-3-methylvalerate) and of (2R)-2,3-dihydroxy-3-methylbutanoate (2,3-dihydroxyisovalerate) into 2-oxo-3-methylbutanoate (2-oxoisovalerate), the penultimate precursor to L-isoleucine and L-valine, respectively. The chain is Dihydroxy-acid dehydratase from Bifidobacterium longum subsp. infantis (strain ATCC 15697 / DSM 20088 / JCM 1222 / NCTC 11817 / S12).